Here is a 413-residue protein sequence, read N- to C-terminus: Serine/threonine transporter SstT (413 aa).

9 helical membrane-spanning segments follow: residues 15–35, 48–68, 82–102, 141–161, 178–198, 216–236, 290–310, 330–350, and 357–377; these read NIVI…TLAP, FVSA…AASI, VIVL…VMSF, ALMT…GLGL, CISA…FGLV, LLAV…PLIV, IPLG…VLTL, LVAA…LLLI, and FGIS…IGVV.

The protein belongs to the dicarboxylate/amino acid:cation symporter (DAACS) (TC 2.A.23) family.

Its subcellular location is the cell inner membrane. The catalysed reaction is L-serine(in) + Na(+)(in) = L-serine(out) + Na(+)(out). It carries out the reaction L-threonine(in) + Na(+)(in) = L-threonine(out) + Na(+)(out). Functionally, involved in the import of serine and threonine into the cell, with the concomitant import of sodium (symport system). The chain is Serine/threonine transporter SstT from Aliivibrio fischeri (strain ATCC 700601 / ES114) (Vibrio fischeri).